We begin with the raw amino-acid sequence, 197 residues long: Casparian strip membrane protein 3 (197 aa).

The Cytoplasmic segment spans residues 1–35 (MSARVDIPADTSAAAKGTAPLIAASTHVKGGYKKG). Residues 36 to 56 (LAIFDLVLRLGAVVTALAAAA) form a helical membrane-spanning segment. Over 57–85 (TMGTTDQTLPFFTQFFQFQASYDDLPTFQ) the chain is Extracellular. Residues 86–106 (FFVIAMAIVSGYLVLSLPFSI) traverse the membrane as a helical segment. Residues 107–119 (VAIIRPHATGPRL) are Cytoplasmic-facing. A helical transmembrane segment spans residues 120–140 (LLIILDTVALTLNTAAAAAAV). Residues 141-171 (AIVDLAQNGNSSANWLGICQQFGDFCQKASG) lie on the Extracellular side of the membrane. An N-linked (GlcNAc...) asparagine glycan is attached at Asn-150. A helical transmembrane segment spans residues 172 to 192 (AVVASFIAAGVLLFLIVISAL). The Cytoplasmic segment spans residues 193-197 (ALRKR).

It belongs to the Casparian strip membrane proteins (CASP) family. As to quaternary structure, homodimer and heterodimers.

The protein resides in the cell membrane. Its function is as follows. Regulates membrane-cell wall junctions and localized cell wall deposition. Required for establishment of the Casparian strip membrane domain (CSD) and the subsequent formation of Casparian strips, a cell wall modification of the root endodermis that determines an apoplastic barrier between the intraorganismal apoplasm and the extraorganismal apoplasm and prevents lateral diffusion. The sequence is that of Casparian strip membrane protein 3 from Populus trichocarpa (Western balsam poplar).